The following is a 106-amino-acid chain: Thiosulfate sulfurtransferase GlpE (106 aa).

The region spanning 16-104 (REQGAVLVDV…WRTTYPQETV (89 aa)) is the Rhodanese domain. The active-site Cysteine persulfide intermediate is the Cys-64.

This sequence belongs to the GlpE family.

Its subcellular location is the cytoplasm. The catalysed reaction is thiosulfate + hydrogen cyanide = thiocyanate + sulfite + 2 H(+). It catalyses the reaction thiosulfate + [thioredoxin]-dithiol = [thioredoxin]-disulfide + hydrogen sulfide + sulfite + 2 H(+). Functionally, transferase that catalyzes the transfer of sulfur from thiosulfate to thiophilic acceptors such as cyanide or dithiols. May function in a CysM-independent thiosulfate assimilation pathway by catalyzing the conversion of thiosulfate to sulfite, which can then be used for L-cysteine biosynthesis. This Pseudomonas syringae pv. syringae (strain B728a) protein is Thiosulfate sulfurtransferase GlpE.